The sequence spans 331 residues: UPF0324 membrane protein SAR0338 (331 aa).

Helical transmembrane passes span Phe-9–Ala-26, Ile-31–Tyr-48, Leu-69–Gly-88, Leu-93–Leu-115, Ala-122–Phe-144, Ser-154–Phe-176, Tyr-183–Gly-202, Leu-217–Met-234, Ile-247–Pro-269, Leu-273–Val-295, and Leu-308–Tyr-330.

Belongs to the UPF0324 family.

The protein localises to the cell membrane. This chain is UPF0324 membrane protein SAR0338, found in Staphylococcus aureus (strain MRSA252).